A 595-amino-acid polypeptide reads, in one-letter code: FERM domain-containing protein 3 (595 aa).

The FERM domain maps to 32–312 (MKCTIRLLDD…ENQAFYKYAK (281 aa)). Residues 529-549 (LLVVGLGLLLFVFPLLLLLLE) traverse the membrane as a helical segment.

The protein localises to the membrane. In terms of biological role, putative tumor suppressor gene that may be implicated in the origin and progression of lung cancer. The sequence is that of FERM domain-containing protein 3 (Frmd3) from Mus musculus (Mouse).